The following is a 354-amino-acid chain: Kelch domain-containing protein 8B (354 aa).

Kelch repeat units lie at residues 1-31 (MAAG…HQDG), 32-79 (HLLV…VLGK), 81-127 (VLVV…ERDG), 128-175 (MVYA…LHGN), 176-222 (KIYV…MAEG), 224-281 (VFSL…SLGG), 282-329 (NIVA…QAGP), and 331-354 (LFVI…RDGV).

The protein localises to the cytoplasm. The protein resides in the midbody. Involved in pinching off the separated nuclei at the cleavage furrow and in cytokinesis. Required for mitotic integrity and maintenance of chromosomal stability. Protects cells against mitotic errors, centrosomal amplification, micronucleus formation and aneuploidy. Plays a key role of midbody function involving abscission of the daughter cells during cytokinesis and appropriate chromosomal and nuclear segregation into the daughter cells. In Mus musculus (Mouse), this protein is Kelch domain-containing protein 8B (Klhdc8b).